The chain runs to 101 residues: Large ribosomal subunit protein uL23 (101 aa).

This sequence belongs to the universal ribosomal protein uL23 family. In terms of assembly, part of the 50S ribosomal subunit. Contacts protein L29, and trigger factor when it is bound to the ribosome.

One of the early assembly proteins it binds 23S rRNA. One of the proteins that surrounds the polypeptide exit tunnel on the outside of the ribosome. Forms the main docking site for trigger factor binding to the ribosome. This is Large ribosomal subunit protein uL23 from Corynebacterium diphtheriae (strain ATCC 700971 / NCTC 13129 / Biotype gravis).